A 106-amino-acid polypeptide reads, in one-letter code: MILTTADTLGKREIIEYKGLVTGIIVRTPTITQGILGGLKNIIGGKNTSYTNVCKEARLHAEQEMINQAKELGANAIVAIRYDSSSLGGNTSGTEVFCYGTAVVVR.

It belongs to the UPF0145 family.

The sequence is that of UPF0145 protein FTL_1249 from Francisella tularensis subsp. holarctica (strain LVS).